The chain runs to 283 residues: MADAIDDIVDVVVSTAPDVRDGLTGRRVYEADENPSGERQLEADVYADELLEARLLDVDAVGSYASEERESVIEADEGGRYHVAADPLDGSSNLKSNNTMGTLFGVYEEPLPAAGDALVAAGYVLYGPITTLITARDGTVTESVIDEDGTRTVVTDDLTLPSDPVVYGFGGRVPNWTPAFADYVESVASELKLRYGGAMIGDVNQVLTYGGVFGYPGLEDRPEGKLRLLFEGHPIAAIVEAAGGASSDGDGSLLKKEPEQLHERTPLFVGNDEYIERLEAALP.

Residues E67, D86, L88, and D89 each contribute to the Mg(2+) site. Residues 89 to 92 (DGSS), Y195, and K225 contribute to the substrate site. Residue E231 participates in Mg(2+) binding.

It belongs to the FBPase class 1 family. As to quaternary structure, homotetramer. Mg(2+) is required as a cofactor.

The protein resides in the cytoplasm. It carries out the reaction beta-D-fructose 1,6-bisphosphate + H2O = beta-D-fructose 6-phosphate + phosphate. It participates in carbohydrate biosynthesis; gluconeogenesis. In Natronomonas pharaonis (strain ATCC 35678 / DSM 2160 / CIP 103997 / JCM 8858 / NBRC 14720 / NCIMB 2260 / Gabara) (Halobacterium pharaonis), this protein is Fructose-1,6-bisphosphatase class 1.